A 137-amino-acid polypeptide reads, in one-letter code: Basic phospholipase A2 homolog Pgo-K49 (137 aa).

Positions 1-16 (MRTLLIVAVLLVGVEG) are cleaved as a signal peptide. 7 disulfide bridges follow: Cys-42-Cys-131, Cys-44-Cys-60, Cys-59-Cys-111, Cys-65-Cys-137, Cys-66-Cys-104, Cys-73-Cys-97, and Cys-91-Cys-102. The segment at 121–133 (KKYKIHMKFFCKK) is important for membrane-damaging activities in eukaryotes and bacteria; heparin-binding.

In terms of tissue distribution, expressed by the venom gland.

Its subcellular location is the secreted. In terms of biological role, snake venom phospholipase A2 homolog that lacks enzymatic activity. Is myotoxic. A model of myotoxic mechanism has been proposed: an apo Lys49-PLA2 is activated by the entrance of a hydrophobic molecule (e.g. fatty acid) at the hydrophobic channel of the protein leading to a reorientation of a monomer. This reorientation causes a transition between 'inactive' to 'active' states, causing alignment of C-terminal and membrane-docking sites (MDoS) side-by-side and putting the membrane-disruption sites (MDiS) in the same plane, exposed to solvent and in a symmetric position for both monomers. The MDoS region stabilizes the toxin on membrane by the interaction of charged residues with phospholipid head groups. Subsequently, the MDiS region destabilizes the membrane with penetration of hydrophobic residues. This insertion causes a disorganization of the membrane, allowing an uncontrolled influx of ions (i.e. calcium and sodium), and eventually triggering irreversible intracellular alterations and cell death. This is Basic phospholipase A2 homolog Pgo-K49 from Cerrophidion godmani (Porthidium godmani).